The following is an 87-amino-acid chain: Small ribosomal subunit protein bS20 (87 aa).

The interval 1-26 (MANIKSAQKRAVQSEKRRQHNASQRS) is disordered.

It belongs to the bacterial ribosomal protein bS20 family.

Functionally, binds directly to 16S ribosomal RNA. This chain is Small ribosomal subunit protein bS20, found in Glaesserella parasuis serovar 5 (strain SH0165) (Haemophilus parasuis).